A 239-amino-acid polypeptide reads, in one-letter code: Ribonuclease HII (239 aa).

One can recognise an RNase H type-2 domain in the interval 30–221 (GPVAGVDEVG…VRRLVTAGTP (192 aa)). Asp36, Glu37, and Asp130 together coordinate a divalent metal cation.

This sequence belongs to the RNase HII family. Requires Mn(2+) as cofactor. Mg(2+) serves as cofactor.

It localises to the cytoplasm. It carries out the reaction Endonucleolytic cleavage to 5'-phosphomonoester.. Endonuclease that specifically degrades the RNA of RNA-DNA hybrids. The chain is Ribonuclease HII from Mycobacterium sp. (strain JLS).